The chain runs to 218 residues: Capsid protein (218 aa).

M1 carries the post-translational modification N-acetylmethionine; by host. Residues 1–28 (MDKSESTSAGRNRRRRPRRGSRSAPSSA) form a disordered region. Positions 11 to 21 (RNRRRRPRRGS) are enriched in basic residues.

The protein belongs to the cucumovirus capsid protein family.

The protein localises to the virion. In terms of biological role, capsid protein. Probably binds RNA and plays a role in packaging. This is Capsid protein from Cucumis sativus (Cucumber).